The sequence spans 423 residues: CinA-like protein (423 aa).

This sequence belongs to the CinA family.

The protein is CinA-like protein of Desulforapulum autotrophicum (strain ATCC 43914 / DSM 3382 / VKM B-1955 / HRM2) (Desulfobacterium autotrophicum).